A 1238-amino-acid polypeptide reads, in one-letter code: Protein translocase subunit SecA 1 (1238 aa).

Residues Gln-107, 125–129, and Asp-570 each bind ATP; that span reads GEGKT. The disordered stretch occupies residues 1194–1220; the sequence is AAGSEGRAEGSVDTVRVEEPRIGRNAP. Residues 1199-1215 show a composition bias toward basic and acidic residues; the sequence is GRAEGSVDTVRVEEPRI. Cys-1221, Cys-1223, Cys-1232, and Cys-1233 together coordinate Zn(2+).

It belongs to the SecA family. Monomer and homodimer. Part of the essential Sec protein translocation apparatus which comprises SecA, SecYEG and auxiliary proteins SecDF. Other proteins may also be involved. The cofactor is Zn(2+).

It is found in the cell inner membrane. Its subcellular location is the cytoplasm. The enzyme catalyses ATP + H2O + cellular proteinSide 1 = ADP + phosphate + cellular proteinSide 2.. Functionally, part of the Sec protein translocase complex. Interacts with the SecYEG preprotein conducting channel. Has a central role in coupling the hydrolysis of ATP to the transfer of proteins into and across the cell membrane, serving as an ATP-driven molecular motor driving the stepwise translocation of polypeptide chains across the membrane. In Rhodopirellula baltica (strain DSM 10527 / NCIMB 13988 / SH1), this protein is Protein translocase subunit SecA 1.